We begin with the raw amino-acid sequence, 266 residues long: MTEKPRIFIVSDSIGETAQYVVDATVSQFNGYLDSKRFSYVQTTRELNNIIKKATEQKTLIAYTLIDPRLREEIATLARKNNIYAVDIMGPMMEAFEEFFQKKPRLQPGLVHRLDKDYFKRVEAMEFTVKYDDSNDDRGVKEADVVLIGVSRTSKTPMCIYLSYRGYKAANIPLVPEVEPTPLIYENPDNKVIGLTIDPLLLNEIRQERLKSLGIDPESSYASIDRINVELEYAEKTMEKIGCPVIDVTNKSIEESANEVIDYLNG.

149 to 156 (GVSRTSKT) contributes to the ADP binding site.

Belongs to the pyruvate, phosphate/water dikinase regulatory protein family. PDRP subfamily.

The catalysed reaction is N(tele)-phospho-L-histidyl/L-threonyl-[pyruvate, phosphate dikinase] + ADP = N(tele)-phospho-L-histidyl/O-phospho-L-threonyl-[pyruvate, phosphate dikinase] + AMP + H(+). It catalyses the reaction N(tele)-phospho-L-histidyl/O-phospho-L-threonyl-[pyruvate, phosphate dikinase] + phosphate + H(+) = N(tele)-phospho-L-histidyl/L-threonyl-[pyruvate, phosphate dikinase] + diphosphate. In terms of biological role, bifunctional serine/threonine kinase and phosphorylase involved in the regulation of the pyruvate, phosphate dikinase (PPDK) by catalyzing its phosphorylation/dephosphorylation. This chain is Putative pyruvate, phosphate dikinase regulatory protein, found in Halothermothrix orenii (strain H 168 / OCM 544 / DSM 9562).